Here is a 171-residue protein sequence, read N- to C-terminus: uncharacterized protein (171 aa).

This is an uncharacterized protein from Caenorhabditis elegans.